The sequence spans 408 residues: MTDGSARPTRRRITVLGSTGSIGTSTVDLLARIPDEIEVRALVGGCNAALLAEQARRLNAEVAVIHDESRHEELKTCLAGTGIRTAAGRQAVIEAGAMEADWTMAAITGAAGLEPTLAAARNGHAVALANKEALVCAGDVMLRAVAEAGATLLPVDSEHNAIAQSLGGCDMESVEKIILTASGGPFRKSSIEEMRAATPEKALKHPTWTMGAKITIDSASMANKGLEVIEAARLFGLTEDRIDVLVHPQSVVHGLVQFRDGSLVSQMGSADMRIPIAHTLAWPKRMVTPCERLDLAAYGRLEFEAPDEVRFAPLRLARQVLRAGGAAPAVFSAANEVAVDAFLNRRIGFLGIGETIDAALQAMDENPELRTLDDVLHWDARGRALAEAHILRQSGGLRNDVSENALNA.

The NADPH site is built by threonine 19, glycine 20, serine 21, isoleucine 22, glycine 45, asparagine 47, and asparagine 130. Residue lysine 131 participates in 1-deoxy-D-xylulose 5-phosphate binding. Residue glutamate 132 coordinates NADPH. Aspartate 156 contacts Mn(2+). Residues serine 157, glutamate 158, serine 182, and histidine 205 each contribute to the 1-deoxy-D-xylulose 5-phosphate site. A Mn(2+)-binding site is contributed by glutamate 158. Glycine 211 contacts NADPH. 4 residues coordinate 1-deoxy-D-xylulose 5-phosphate: serine 218, asparagine 223, lysine 224, and glutamate 227. Glutamate 227 is a Mn(2+) binding site.

The protein belongs to the DXR family. Mg(2+) serves as cofactor. It depends on Mn(2+) as a cofactor.

It catalyses the reaction 2-C-methyl-D-erythritol 4-phosphate + NADP(+) = 1-deoxy-D-xylulose 5-phosphate + NADPH + H(+). Its pathway is isoprenoid biosynthesis; isopentenyl diphosphate biosynthesis via DXP pathway; isopentenyl diphosphate from 1-deoxy-D-xylulose 5-phosphate: step 1/6. Catalyzes the NADPH-dependent rearrangement and reduction of 1-deoxy-D-xylulose-5-phosphate (DXP) to 2-C-methyl-D-erythritol 4-phosphate (MEP). This chain is 1-deoxy-D-xylulose 5-phosphate reductoisomerase, found in Gluconobacter oxydans (strain 621H) (Gluconobacter suboxydans).